The chain runs to 855 residues: Coiled-coil domain-containing protein 87 (855 aa).

Disordered stretches follow at residues 23–43 (LFPS…QDAT) and 278–302 (SRPS…PTSP). The span at 287–296 (PSHSPSSESH) shows a compositional bias: low complexity. Coiled coils occupy residues 387–413 (TRRL…EASG) and 764–789 (RSYL…ESVF).

It belongs to the CCDC87 family. Specifically expressed in testis (at protein level). Not detected in other tissues tested (at protein level). In the testis, localizes to pachytene spermatocytes and spermatids.

Its function is as follows. Plays a role in spermatogenesis, where it is important for normal sperm head morphology. Also required for the acrosome reaction and thus normal male fertility. The polypeptide is Coiled-coil domain-containing protein 87 (Ccdc87) (Mus musculus (Mouse)).